The sequence spans 257 residues: MFDFIGVSRYASKELRKEPIVSTIPFTPKKSDERPDESTLTDRQRKVLDAIKTHLAKQGFAPSFREIGEAAGLKSPSSVKHQLQVLDEKGFIRMNANKGRAIEVVNLNDEEPNGKVAQVIPFPSQDDACGSIMASHDVPLVGRIAAGVPITAEQHVDDVMRLPERLTGTGNLFMLEVHGDSMIDAAICDGDFVVVREQNSAENGDIVAALLDDEATVKTFRKDHGHVWLIPHNPAYSPIDGTHAEIMGKVVTVLRKI.

The H-T-H motif DNA-binding region spans 64–84 (FREIGEAAGLKSPSSVKHQLQ). Residues Ser-181 and Lys-218 each act as for autocatalytic cleavage activity in the active site.

The protein belongs to the peptidase S24 family. In terms of assembly, homodimer.

It catalyses the reaction Hydrolysis of Ala-|-Gly bond in repressor LexA.. Represses a number of genes involved in the response to DNA damage (SOS response), including recA and lexA. In the presence of single-stranded DNA, RecA interacts with LexA causing an autocatalytic cleavage which disrupts the DNA-binding part of LexA, leading to derepression of the SOS regulon and eventually DNA repair. The polypeptide is LexA repressor (Bifidobacterium adolescentis (strain ATCC 15703 / DSM 20083 / NCTC 11814 / E194a)).